A 336-amino-acid chain; its full sequence is MGGGLVLPTRDPPKEQDTSETATNIPKLLKSIPGVKLGQQIRIGYKPGPETAKAFPEFDIKEVSNGLYELSRKSYLGDTKTCCINPSLSYYWEDSKNKIFDEYATGRSLKTCDPLTKTISGSTLCDNILTSLCLDEKSGVDRTMCNEWMGYALNRPDLSIPKSINDRYTKLCSKGANNIVCEDWLHHLRIIGGKENDEVIDNVLMQQTPEFKEKYMKCSFPSHNTVFLAYRVIEPRECWDQECITSNVHFLLSKNYHNLTLCHIYRCNISINNLLIDGKSSVKISCHDENISNKDKPKARNKAKFIDDILGSSFNINFGFFFVIFIMIALILIVLL.

Positions 1–22 (MGGGLVLPTRDPPKEQDTSETA) are disordered.

Belongs to the poxviruses A16/G9/J5 family.

The protein is Protein FPV127 of Vertebrata (FPV).